A 433-amino-acid polypeptide reads, in one-letter code: ATP-dependent protease ATPase subunit HslU (433 aa).

ATP-binding positions include Val18, 60-65 (GVGKTE), Asp246, Glu311, and Arg383.

The protein belongs to the ClpX chaperone family. HslU subfamily. As to quaternary structure, a double ring-shaped homohexamer of HslV is capped on each side by a ring-shaped HslU homohexamer. The assembly of the HslU/HslV complex is dependent on binding of ATP.

It is found in the cytoplasm. Its function is as follows. ATPase subunit of a proteasome-like degradation complex; this subunit has chaperone activity. The binding of ATP and its subsequent hydrolysis by HslU are essential for unfolding of protein substrates subsequently hydrolyzed by HslV. HslU recognizes the N-terminal part of its protein substrates and unfolds these before they are guided to HslV for hydrolysis. The chain is ATP-dependent protease ATPase subunit HslU from Nitrobacter hamburgensis (strain DSM 10229 / NCIMB 13809 / X14).